Consider the following 488-residue polypeptide: Histamine H1 receptor (488 aa).

Over 1 to 29 (MSLPNTSSASEDKMCEGNRTAMASPQLLP) the chain is Extracellular. 2 N-linked (GlcNAc...) asparagine glycosylation sites follow: Asn5 and Asn18. Residues 30-50 (LVVVLSSISLVTVGLNLLVLY) traverse the membrane as a helical segment. At 51–64 (AVRSERKLHTVGNL) the chain is on the cytoplasmic side. Residues 65-89 (YIVSLSVADLIVGAVVMPMNILYLI) traverse the membrane as a helical segment. Topologically, residues 90–97 (MTKWSLGR) are extracellular. A helical membrane pass occupies residues 98–123 (PLCLFWLSMDYVASTASIFSVFILCI). An intrachain disulfide couples Cys100 to Cys180. The histamine site is built by Asp107 and Thr112. Residues 107–112 (DYVAST) form an important for agonist binding region. The Cytoplasmic portion of the chain corresponds to 124-144 (DRYRSVQQPLRYLRYRTKTRA). A phosphothreonine mark is found at Thr140 and Thr142. The chain crosses the membrane as a helical span at residues 145–164 (SATILGAWFLSFLWVIPILG). Residues 165–188 (WHHFTPLAPELREDKCETDFYNVT) are Extracellular-facing. The chain crosses the membrane as a helical span at residues 189–211 (WFKIMTAIINFYLPTLLMLWFYV). Asn198 is a binding site for histamine. The Cytoplasmic segment spans residues 212-417 (KIYKAVRRHC…LNRERKAAKQ (206 aa)). Ser230 is subject to Phosphoserine. The segment at 245 to 337 (KEGAKKPGKE…SQPKMDEQSL (93 aa)) is disordered. A compositionally biased stretch (polar residues) spans 322–337 (ANDQTLSQPKMDEQSL). A phosphoserine mark is found at Ser344, Ser347, Ser381, Ser383, Ser397, and Ser399. The chain crosses the membrane as a helical span at residues 418–441 (LGCIMAAFILCWIPYFIFFMVIAF). Residues 425-429 (FILCW) are important for agonist binding. Tyr432 contacts histamine. Cys442 and Cys445 are oxidised to a cystine. Over 442 to 447 (CNSCCS) the chain is Extracellular. A helical membrane pass occupies residues 448 to 470 (EPVHMFTIWLGYINSTLNPLIYP). Over 471 to 488 (LCNENFKKTFKKILHIRS) the chain is Cytoplasmic.

The protein belongs to the G-protein coupled receptor 1 family. Post-translationally, phosphorylation at sites in the second and third cytoplasmic loops independently contribute to agonist-induced receptor down-regulation.

It localises to the cell membrane. In terms of biological role, G-protein-coupled receptor for histamine, a biogenic amine that functions as an immune modulator and a neurotransmitter. Through the H1 receptor, histamine mediates the contraction of smooth muscles and increases capillary permeability due to contraction of terminal venules. Also mediates neurotransmission in the central nervous system and thereby regulates circadian rhythms, emotional and locomotor activities as well as cognitive functions. This Mus musculus (Mouse) protein is Histamine H1 receptor.